The chain runs to 645 residues: Threonine--tRNA ligase (645 aa).

Positions 1 to 63 (MNQINIQFPD…EQDGAIEIIT (63 aa)) constitute a TGS domain. The tract at residues 242–540 (DHRKIGKDLE…LTEETKGAFP (299 aa)) is catalytic. Residues C336, H387, and H517 each contribute to the Zn(2+) site.

This sequence belongs to the class-II aminoacyl-tRNA synthetase family. Homodimer. Zn(2+) is required as a cofactor.

The protein localises to the cytoplasm. It carries out the reaction tRNA(Thr) + L-threonine + ATP = L-threonyl-tRNA(Thr) + AMP + diphosphate + H(+). Functionally, catalyzes the attachment of threonine to tRNA(Thr) in a two-step reaction: L-threonine is first activated by ATP to form Thr-AMP and then transferred to the acceptor end of tRNA(Thr). Also edits incorrectly charged L-seryl-tRNA(Thr). This chain is Threonine--tRNA ligase, found in Staphylococcus epidermidis (strain ATCC 35984 / DSM 28319 / BCRC 17069 / CCUG 31568 / BM 3577 / RP62A).